A 43-amino-acid chain; its full sequence is Protein PsbN (43 aa).

A helical transmembrane segment spans residues 5–27; it reads TLVAIFISGSLVSFTGYALYTAF.

It belongs to the PsbN family.

The protein localises to the plastid. It is found in the chloroplast thylakoid membrane. In terms of biological role, may play a role in photosystem I and II biogenesis. This Nelumbo lutea (American lotus) protein is Protein PsbN.